The chain runs to 363 residues: Endopolygalacturonase 1 (363 aa).

The signal sequence occupies residues Met1 to Ala17. Positions Ser18–Arg26 are excised as a propeptide. Cys29 and Cys44 form a disulfide bridge. 4 PbH1 repeats span residues Ser188–Ser209, Gly210–Ser230, Val239–Thr260, and Val268–Gln290. Residue Asp202 is the Proton donor of the active site. Cys204 and Cys220 are oxidised to a cystine. The N-linked (GlcNAc...) asparagine glycan is linked to Asn212. The active site involves His224. 2 disulfide bridges follow: Cys330–Cys333 and Cys352–Cys363.

It belongs to the glycosyl hydrolase 28 family.

The protein localises to the secreted. The enzyme catalyses (1,4-alpha-D-galacturonosyl)n+m + H2O = (1,4-alpha-D-galacturonosyl)n + (1,4-alpha-D-galacturonosyl)m.. Functionally, involved in maceration and soft-rotting of plant tissue. Hydrolyzes the 1,4-alpha glycosidic bonds of de-esterified pectate in the smooth region of the plant cell wall. The polypeptide is Endopolygalacturonase 1 (PG1) (Colletotrichum lindemuthianum (Bean anthracnose fungus)).